A 158-amino-acid polypeptide reads, in one-letter code: Protein shisa-like-2B (158 aa).

The chain crosses the membrane as a helical span at residues 65 to 85 (IGALVGLGIAALVLLAFVISV).

It belongs to the shisa family.

It is found in the membrane. This is Protein shisa-like-2B (Shisal2b) from Mus musculus (Mouse).